The sequence spans 595 residues: Phenylalanine--tRNA ligase beta subunit (595 aa).

A 3'-CCA residue in tRNA region spans residues 86–90 (KLSKP). The B5 domain maps to 292–370 (FNDRIMDVSI…VGYGFNNLPK (79 aa)). Mg(2+)-binding residues include D348, D354, E357, and D358.

Belongs to the phenylalanyl-tRNA synthetase beta subunit family. Type 2 subfamily. Tetramer of two alpha and two beta subunits. Mg(2+) serves as cofactor.

The protein resides in the cytoplasm. The catalysed reaction is tRNA(Phe) + L-phenylalanine + ATP = L-phenylalanyl-tRNA(Phe) + AMP + diphosphate + H(+). This chain is Phenylalanine--tRNA ligase beta subunit (FRS1), found in Saccharomyces cerevisiae (strain ATCC 204508 / S288c) (Baker's yeast).